Here is a 684-residue protein sequence, read N- to C-terminus: U4/U6 small nuclear ribonucleoprotein Prp3 (684 aa).

In terms of domain architecture, PWI spans 1-87; the sequence is MSLSKRELDE…HSKSNSDRNR (87 aa). Residues 73-107 are compositionally biased toward basic and acidic residues; that stretch reads GRSSRHSKSNSDRNRKRELKDVFGDDSEVSKESSG. 2 disordered regions span residues 73-109 and 162-183; these read GRSSRHSKSNSDRNRKRELKDVFGDDSEVSKESSGVK and FISPPTPQPKISSSSQSERLPI. Residues 170-183 are compositionally biased toward polar residues; it reads PKISSSSQSERLPI.

In terms of assembly, component of the precatalytic spliceosome (spliceosome B complex). Component of the U4/U6-U5 tri-snRNP complex, a building block of the precatalytic spliceosome (spliceosome B complex). The U4/U6-U5 tri-snRNP complex is composed of the U4, U6 and U5 snRNAs and at least PRPF3, PRPF4, PRPF6, PRPF8, PRPF31, SNRNP200, TXNL4A, SNRNP40, SNRPB, SNRPD1, SNRPD2, SNRPD3, SNRPE, SNRPF, SNRPG, DDX23, CD2BP2, PPIH, SNU13, EFTUD2, SART1 and USP39, plus LSM2, LSM3, LSM4, LSM5, LSM6, LSM7 and LSM8.

It is found in the nucleus. The protein resides in the nucleus speckle. Plays a role in pre-mRNA splicing as component of the U4/U6-U5 tri-snRNP complex that is involved in spliceosome assembly, and as component of the precatalytic spliceosome (spliceosome B complex). In Gallus gallus (Chicken), this protein is U4/U6 small nuclear ribonucleoprotein Prp3 (PRPF3).